The chain runs to 1031 residues: Zinc finger protein 445 (1031 aa).

The segment at 1 to 43 (MPPGRWHAAYPAQAQSSRERGRLQTVKKEEEDESYTPVQAARP) is disordered. Residues 17-29 (SRERGRLQTVKKE) are compositionally biased toward basic and acidic residues. A Glycyl lysine isopeptide (Lys-Gly) (interchain with G-Cter in SUMO1) cross-link involves residue K28. Positions 55–137 (RQLFRQLRYH…ALLEELQRDL (83 aa)) constitute an SCAN box domain. In terms of domain architecture, KRAB spans 234 to 304 (MTFKDVEVTF…NMQAAQPKGN (71 aa)). Residues K317, K374, K375, and K399 each participate in a glycyl lysine isopeptide (Lys-Gly) (interchain with G-Cter in SUMO2) cross-link. C2H2-type zinc fingers lie at residues 485 to 507 (FKCS…QRLH), 513 to 535 (FKCR…EKIH), and 541 to 563 (YKCD…RETH). K567 is covalently cross-linked (Glycyl lysine isopeptide (Lys-Gly) (interchain with G-Cter in SUMO2)). 2 consecutive C2H2-type zinc fingers follow at residues 597 to 619 (FDCS…QRIH) and 625 to 647 (YKCT…MRLH). K654 is covalently cross-linked (Glycyl lysine isopeptide (Lys-Gly) (interchain with G-Cter in SUMO2)). C2H2-type zinc fingers lie at residues 681–703 (FLCQ…QRIH) and 709–731 (YQCS…KKKH). Glycyl lysine isopeptide (Lys-Gly) (interchain with G-Cter in SUMO2) cross-links involve residues K736 and K758. 5 consecutive C2H2-type zinc fingers follow at residues 762–784 (YKCS…QRVH), 790–812 (YKCR…QRIH), 840–862 (FWCQ…KGIH), 868–890 (YKCN…QRIH), and 896–918 (FKCQ…QRKH). The interval 911–939 (LSSHQRKHTRAAQAERSPPARSSSQDTKL) is disordered. Glycyl lysine isopeptide (Lys-Gly) (interchain with G-Cter in SUMO2) cross-links involve residues K938, K956, and K975. 2 consecutive C2H2-type zinc fingers follow at residues 978-1000 (HKCS…KRFH) and 1006-1028 (FKCS…MKNH).

The protein belongs to the krueppel C2H2-type zinc-finger protein family.

It is found in the nucleus. In terms of biological role, transcription regulator required to maintain maternal and paternal gene imprinting, a process by which gene expression is restricted in a parent of origin-specific manner by epigenetic modification of genomic DNA and chromatin, including DNA methylation. Acts by controlling DNA methylation during the earliest multicellular stages of development at multiple imprinting control regions (ICRs). Acts together with ZFP57, but seems to be the major factor in human early embryonic imprinting maintenance. In contrast, in mice, ZFP57 plays the predominant role in imprinting maintenance. The protein is Zinc finger protein 445 of Homo sapiens (Human).